Reading from the N-terminus, the 270-residue chain is Sugar phosphatase YidA (270 aa).

Asp-9 functions as the Nucleophile in the catalytic mechanism. Mg(2+) is bound at residue Asp-9. Residue Met-10 participates in phosphate binding. Asp-11 lines the Mg(2+) pocket. Phosphate contacts are provided by residues 43–44 (TG) and Lys-197. Position 220 (Asp-220) interacts with Mg(2+). Asn-223 contributes to the phosphate binding site.

The protein belongs to the HAD-like hydrolase superfamily. Cof family. In terms of assembly, homodimer. The cofactor is Mg(2+).

It carries out the reaction sugar phosphate + H2O = sugar + phosphate.. In terms of biological role, catalyzes the dephosphorylation of different sugar phosphates. This Escherichia coli O6:H1 (strain CFT073 / ATCC 700928 / UPEC) protein is Sugar phosphatase YidA (yidA).